We begin with the raw amino-acid sequence, 972 residues long: Peptidyl-glycine alpha-amidating monooxygenase (972 aa).

The N-terminal stretch at 1 to 20 (MAGFRSLLVLLLVFPSGCVG) is a signal peptide. Residues 1 to 494 (MAGFRSLLVL…EGTWEPEHTG (494 aa)) form a peptidylglycine alpha-hydroxylating monooxygenase region. The propeptide occupies 21–30 (FRSPLSVFKR). Topologically, residues 31-873 (FKETTRSFSN…VPAVLITTLL (843 aa)) are intragranular. 5 disulfide bridges follow: Cys-42–Cys-181, Cys-76–Cys-121, Cys-109–Cys-126, Cys-222–Cys-329, and Cys-288–Cys-310. His-102 and His-103 together coordinate Cu(2+). Cu(2+) contacts are provided by His-167, His-237, His-239, and Met-309. Positions 495–817 (DFHVEEALDW…STEKMEHRSV (323 aa)) are peptidyl-alpha-hydroxyglycine alpha-amidating lyase. 4 NHL repeats span residues 498–541 (VEEA…NSFD), 567–608 (AAVL…LDPK), 617–662 (LGRS…FSPS), and 670–714 (GEAS…FKTD). A Ca(2+)-binding site is contributed by Val-517. Arg-530 is a binding site for a protein. A Zn(2+)-binding site is contributed by His-582. Leu-584 lines the Ca(2+) pocket. A disulfide bond links Cys-631 and Cys-652. Tyr-651 contributes to the a protein binding site. His-687 provides a ligand contact to Zn(2+). Cysteines 699 and 710 form a disulfide. Position 703 (Arg-703) interacts with a protein. Asn-762 carries N-linked (GlcNAc...) asparagine glycosylation. The NHL 5 repeat unit spans residues 766–809 (GEIIDVFKPVRKHFDMPHDIAASEDGTVYVGDAHTNTVWKFTST). Zn(2+) is bound at residue His-783. Asp-784 lines the Ca(2+) pocket. A helical transmembrane segment spans residues 874-897 (VIPVVVLLAIALFIRWKKSRAFGD). Residues 898–972 (SERKLEASSG…APPPAPAPSS (75 aa)) lie on the Cytoplasmic side of the membrane. Positions 925–942 (NFFASRKGYSRKGFDRLS) are interaction with RASSF9. Ser-929 and Ser-942 each carry phosphoserine. Positions 937–972 (GFDRLSTEGSDQEKDEDASESEEEYSAPPPAPAPSS) are disordered. At Thr-943 the chain carries Phosphothreonine. At Ser-946 the chain carries Phosphoserine; by UHMK1. A compositionally biased stretch (acidic residues) spans 949 to 961 (EKDEDASESEEEY). Position 957 is a phosphoserine (Ser-957). The segment covering 963–972 (APPPAPAPSS) has biased composition (pro residues).

It in the C-terminal section; belongs to the peptidyl-alpha-hydroxyglycine alpha-amidating lyase family. This sequence in the N-terminal section; belongs to the copper type II ascorbate-dependent monooxygenase family. In terms of assembly, monomer. Interacts with RASSF9. It depends on Zn(2+) as a cofactor. Requires Cu(2+) as cofactor.

It is found in the cytoplasmic vesicle. It localises to the secretory vesicle membrane. It catalyses the reaction a [peptide]-C-terminal glycine + 2 L-ascorbate + O2 = a [peptide]-C-terminal (2S)-2-hydroxyglycine + 2 monodehydro-L-ascorbate radical + H2O. The catalysed reaction is a [peptide]-C-terminal (2S)-2-hydroxyglycine = a [peptide]-C-terminal amide + glyoxylate. The enzyme catalyses N-dodecanoylglycine + 2 L-ascorbate + O2 = N-dodecanoyl-(2S)-hydroxyglycine + 2 monodehydro-L-ascorbate radical + H2O. It carries out the reaction N-dodecanoyl-(2S)-hydroxyglycine = dodecanamide + glyoxylate. It catalyses the reaction N-(9Z,12Z,15Z)-octadecatrienoylglycine + 2 L-ascorbate + O2 = N-(9Z,12Z,15Z)-octadecatrienoyl-(2S)-hydroxyglycine + 2 monodehydro-L-ascorbate radical + H2O. The catalysed reaction is N-(9Z,12Z,15Z)-octadecatrienoyl-(2S)-hydroxyglycine = (9Z,12Z,15Z)-octadecatrienamide + glyoxylate. The enzyme catalyses N-(9Z-octadecenoyl)glycine + 2 L-ascorbate + O2 = N-(9Z-octadecenoyl)-(2S)-hydroxyglycine + 2 monodehydro-L-ascorbate radical + H2O. It carries out the reaction N-(9Z-octadecenoyl)-(2S)-hydroxyglycine = (9Z)-octadecenamide + glyoxylate. It catalyses the reaction N-tetradecanoylglycine + 2 L-ascorbate + O2 = N-tetradecanoyl-(2S)-hydroxyglycine + 2 monodehydro-L-ascorbate radical + H2O. The catalysed reaction is N-tetradecanoyl-(2S)-hydroxyglycine = tetradecamide + glyoxylate. The enzyme catalyses N-decanoylglycine + 2 L-ascorbate + O2 = N-decanoyl-(2S)-hydroxyglycine + 2 monodehydro-L-ascorbate radical + H2O. It carries out the reaction N-decanoyl-(2S)-hydroxyglycine = decanamide + glyoxylate. It catalyses the reaction N-octanoylglycine + 2 L-ascorbate + O2 = N-octanoyl-(2S)-hydroxyglycine + 2 monodehydro-L-ascorbate radical + H2O. The catalysed reaction is N-octanoyl-(2S)-hydroxyglycine = octanamide + glyoxylate. PAM activity is inhibited by EDTA, phenylglyoxal and diethyl pyrocarbonate. PAL activity is stimulated by cadmium and inhibited by mercury. Functionally, bifunctional enzyme that catalyzes amidation of the C-terminus of proteins. Alpha-amidation is present at the C-terminus of many endocrine hormones and neuropeptides and is required for their activity. C-terminal amidation also takes place in response to protein fragmentation triggered by oxidative stress, promoting degradation of amidated protein fragments by the proteasome. Alpha-amidation involves two sequential reactions, both of which are catalyzed by separate catalytic domains of the enzyme. The first step, catalyzed by peptidyl alpha-hydroxylating monooxygenase (PHM) domain, is the copper-, ascorbate-, and O2- dependent stereospecific hydroxylation (with S stereochemistry) at the alpha-carbon (C-alpha) of the C-terminal glycine of the peptidylglycine substrate. The second step, catalyzed by the peptidylglycine amidoglycolate lyase (PAL) domain, is the zinc-dependent cleavage of the N-C-alpha bond, producing the alpha-amidated peptide and glyoxylate. Similarly, catalyzes the two-step conversion of an N-fatty acylglycine to a primary fatty acid amide and glyoxylate. The polypeptide is Peptidyl-glycine alpha-amidating monooxygenase (PAM) (Bos taurus (Bovine)).